The primary structure comprises 318 residues: Porphobilinogen deaminase (318 aa).

C241 is modified (S-(dipyrrolylmethanemethyl)cysteine).

The protein belongs to the HMBS family. Monomer. Dipyrromethane serves as cofactor.

The catalysed reaction is 4 porphobilinogen + H2O = hydroxymethylbilane + 4 NH4(+). Its pathway is porphyrin-containing compound metabolism; protoporphyrin-IX biosynthesis; coproporphyrinogen-III from 5-aminolevulinate: step 2/4. Tetrapolymerization of the monopyrrole PBG into the hydroxymethylbilane pre-uroporphyrinogen in several discrete steps. The sequence is that of Porphobilinogen deaminase from Geobacter metallireducens (strain ATCC 53774 / DSM 7210 / GS-15).